The sequence spans 155 residues: Ubiquinone biosynthesis protein COQ4 homolog, mitochondrial (155 aa).

Belongs to the COQ4 family. In terms of assembly, component of a multi-subunit COQ enzyme complex. The cofactor is Zn(2+).

The protein localises to the mitochondrion inner membrane. The enzyme catalyses a 4-hydroxy-3-methoxy-5-(all-trans-polyprenyl)benzoate + H(+) = a 2-methoxy-6-(all-trans-polyprenyl)phenol + CO2. Its pathway is cofactor biosynthesis; ubiquinone biosynthesis. Its function is as follows. Lyase that catalyzes the C1-decarboxylation of 4-hydroxy-3-methoxy-5-(all-trans-polyprenyl)benzoic acid into 2-methoxy-6-(all-trans-polyprenyl)phenol during ubiquinone biosynthesis. In Cryptosporidium hominis, this protein is Ubiquinone biosynthesis protein COQ4 homolog, mitochondrial.